Here is a 60-residue protein sequence, read N- to C-terminus: Large ribosomal subunit protein bL32 (60 aa).

The interval 1–43 is disordered; the sequence is MAVQQNRKTRSRRGMRRSHDALTGKTLSVDSTTGEKHLRHHVT. A compositionally biased stretch (basic residues) spans 7–16; it reads RKTRSRRGMR.

The protein belongs to the bacterial ribosomal protein bL32 family.

The chain is Large ribosomal subunit protein bL32 from Saccharophagus degradans (strain 2-40 / ATCC 43961 / DSM 17024).